Reading from the N-terminus, the 289-residue chain is ATP synthase gamma chain (289 aa).

It belongs to the ATPase gamma chain family. F-type ATPases have 2 components, CF(1) - the catalytic core - and CF(0) - the membrane proton channel. CF(1) has five subunits: alpha(3), beta(3), gamma(1), delta(1), epsilon(1). CF(0) has three main subunits: a, b and c.

It is found in the cell membrane. Its function is as follows. Produces ATP from ADP in the presence of a proton gradient across the membrane. The gamma chain is believed to be important in regulating ATPase activity and the flow of protons through the CF(0) complex. The chain is ATP synthase gamma chain from Lactococcus lactis subsp. cremoris (strain MG1363).